Reading from the N-terminus, the 353-residue chain is Protein RecA (353 aa).

Residue 68-75 (GPESSGKT) coordinates ATP.

This sequence belongs to the RecA family.

The protein localises to the cytoplasm. Its function is as follows. Can catalyze the hydrolysis of ATP in the presence of single-stranded DNA, the ATP-dependent uptake of single-stranded DNA by duplex DNA, and the ATP-dependent hybridization of homologous single-stranded DNAs. It interacts with LexA causing its activation and leading to its autocatalytic cleavage. The protein is Protein RecA of Roseiflexus sp. (strain RS-1).